We begin with the raw amino-acid sequence, 550 residues long: Hydroxylamine reductase (550 aa).

4 residues coordinate [2Fe-2S] cluster: C3, C6, C18, and C25. 8 residues coordinate hybrid [4Fe-2O-2S] cluster: H249, E273, C317, C405, C433, C458, E492, and K494. At C405 the chain carries Cysteine persulfide.

It belongs to the HCP family. Requires [2Fe-2S] cluster as cofactor. The cofactor is hybrid [4Fe-2O-2S] cluster.

Its subcellular location is the cytoplasm. It catalyses the reaction A + NH4(+) + H2O = hydroxylamine + AH2 + H(+). Catalyzes the reduction of hydroxylamine to form NH(3) and H(2)O. The polypeptide is Hydroxylamine reductase (Escherichia coli (strain SMS-3-5 / SECEC)).